The following is a 95-amino-acid chain: Large ribosomal subunit protein bL27 (95 aa).

Positions 1-10 are excised as a propeptide; it reads MRFILNLQFF.

It belongs to the bacterial ribosomal protein bL27 family. In terms of processing, the N-terminus is cleaved by ribosomal processing cysteine protease Prp.

The sequence is that of Large ribosomal subunit protein bL27 from Mesoplasma florum (strain ATCC 33453 / NBRC 100688 / NCTC 11704 / L1) (Acholeplasma florum).